The sequence spans 567 residues: CTD small phosphatase-like protein 2 (567 aa).

Disordered regions lie at residues 31–53, 100–150, and 280–361; these read QQQQ…HQCE, ASST…FSSV, and NKEN…EEFN. Composition is skewed to low complexity over residues 100–118, 130–150, and 286–297; these read ASST…SPLK, SMND…FSSV, and ESNNSNSNSNSS. Polar residues predominate over residues 298–308; sequence PSFFHNLQQHP. A compositionally biased stretch (low complexity) spans 309–332; the sequence is TSAATTTTTTTTTITTTSATTSII. Acidic residues predominate over residues 337–360; that stretch reads NSDDEIDDECDDESEEEEEDEEEF. The FCP1 homology domain occupies 386–544; the sequence is HSSPKISLVL…LQLVPFLESL (159 aa).

This sequence belongs to the CTDSPL2 family.

Its function is as follows. Probable phosphatase. In Dictyostelium discoideum (Social amoeba), this protein is CTD small phosphatase-like protein 2 (ctdspl2).